Reading from the N-terminus, the 498-residue chain is Cystathionine beta-synthase (498 aa).

Residues 1–25 are disordered; it reads MSAPEGPSKCTWTPNTTENTPHTTR. The segment covering 11–22 has biased composition (low complexity); that stretch reads TWTPNTTENTPH. Lys-73 is subject to N6-(pyridoxal phosphate)lysine. Pyridoxal 5'-phosphate contacts are provided by residues Asn-103, 210-214, and Ser-302; that span reads GTGGT. CBS domains are found at residues 374–430 and 435–497; these read TLPK…KKAV and VSKV…SQQK.

Belongs to the cysteine synthase/cystathionine beta-synthase family. Requires pyridoxal 5'-phosphate as cofactor.

The enzyme catalyses L-homocysteine + L-serine = L,L-cystathionine + H2O. It participates in amino-acid biosynthesis; L-cysteine biosynthesis; L-cysteine from L-homocysteine and L-serine: step 1/2. This Dictyostelium discoideum (Social amoeba) protein is Cystathionine beta-synthase (cysB).